We begin with the raw amino-acid sequence, 51 residues long: Large ribosomal subunit protein eL39z/eL39x (51 aa).

Residues 1–21 are disordered; it reads MPSHKSFMIKKKLGKKMRQNR. Over residues 7–19 the composition is skewed to basic residues; that stretch reads FMIKKKLGKKMRQ.

It belongs to the eukaryotic ribosomal protein eL39 family.

This is Large ribosomal subunit protein eL39z/eL39x (RPL39A) from Arabidopsis thaliana (Mouse-ear cress).